The primary structure comprises 687 residues: MEEFVGLREGSSGNPVTLQELWGPCPRIRRGIRGGLEWLKQKLFRLGEDWYFLMTLGVLMALVSCAMDLAVESVVRAHQWLYREIGDSHLLRYLSWTVYPVALVSFSSGFSQSITPSSGGSGIPEVKTMLAGVVLEDYLDIKNFGAKVVGLSCTLACGSTLFLGKVGPFVHLSVMMAAYLGRVRTTTIGEPENKSKQNEMLVAAAAVGVATVFAAPFSGVLFSIEVMSSHFSVWDYWRGFFAATCGAFMFRLLAVFNSEQETITSLYKTSFRVDVPFDLPEIFFFVALGGLCGILGSAYLFCQRIFFGFIRNNRFSSKLLATSKPVYSALATLVLASITYPPSAGRFLASRLSMKQHLDSLFDNHSWALMTQNSSPPWPEELDPQHLWWEWYHPRFTIFGTLAFFLVMKFWMLILATTIPMPAGYFMPIFVYGAAIGRLFGETLSFIFPEGIVAGGITNPIMPGGYALAGAAAFSGAVTHTISTALLAFEVTGQIVHALPVLMAVLAANAIAQSCQPSFYDGTVIVKKLPYLPRILGRNIGSHRVRVEHFMNHSITTLAKDMPLEEVVKVVTSTDVAKYPLVESTESQILVGIVRRAQLVQALKAEPPSWAPGHQQCLQDILAAGCPTEPVTLKLSPETSLHEAHNLFELLNLHSLFVTSRGRAVGCVSWVEMKKAISNLTNPPAPK.

Residues 1 to 50 (MEEFVGLREGSSGNPVTLQELWGPCPRIRRGIRGGLEWLKQKLFRLGEDW) lie on the Cytoplasmic side of the membrane. The next 2 membrane-spanning stretches (helical) occupy residues 51–82 (YFLM…QWLY) and 91–111 (LRYL…SGFS). An intramembrane region (helical) is located at residues 116 to 127 (PSSGGSGIPEVK). Serine 121 contributes to the chloride binding site. 2 helical membrane passes run 141-160 (IKNF…CGST) and 161-180 (LFLG…AAYL). Asparagine 193 carries an N-linked (GlcNAc...) asparagine glycan. Positions 203 to 224 (AAAAVGVATVFAAPFSGVLFSI) form an intramembrane region, helical. A helical transmembrane segment spans residues 236-255 (YWRGFFAATCGAFMFRLLAV). Positions 259, 261, 278, and 281 each coordinate Ca(2+). A run of 2 helical transmembrane segments spans residues 282-310 (IFFF…FGFI) and 325-342 (PVYS…TYPP). The segment at residues 349 to 360 (ASRLSMKQHLDS) is an intramembrane region (helical). A run of 2 helical transmembrane segments spans residues 400 to 420 (GTLA…TTIP) and 421 to 440 (MPAG…GRLF). Phenylalanine 426 lines the chloride pocket. The segment at residues 464 to 496 (GGYALAGAAAFSGAVTHTISTALLAFEVTGQIV) is an intramembrane region (helical). A helical transmembrane segment spans residues 500-520 (PVLMAVLAANAIAQSCQPSFY). Over 521–687 (DGTVIVKKLP…SNLTNPPAPK (167 aa)) the chain is Cytoplasmic. 2 CBS domains span residues 551–609 (MNHS…EPPS) and 626–684 (CPTE…TNPP).

It belongs to the chloride channel (TC 2.A.49) family. CLCNKB subfamily. In terms of assembly, homodimer. Interacts with BSND. N-glycosylated.

The protein resides in the basolateral cell membrane. It carries out the reaction chloride(in) = chloride(out). The enzyme catalyses iodide(out) = iodide(in). The catalysed reaction is nitrate(in) = nitrate(out). It catalyses the reaction bromide(in) = bromide(out). Activated by extracellular Ca(2+) and inhibited by extracellular acidic pH. Functionally, anion-selective channel permeable to small monovalent anions with ion selectivity for chloride &gt; bromide &gt; nitrate &gt; iodide. Forms a homodimeric channel where each subunit has its own ion conduction pathway. May conduct double-barreled currents controlled by two types of gates, two fast gates that control each subunit independently and a slow common gate that opens and shuts off both subunits simultaneously. Assembles with the regulatory subunit BSND/Barttin for sorting at the basolateral plasma membrane domain and functional switch to the ion conducting state. CLCNKB:BSND channels display mostly a linear current-voltage relationship controlled by common gate. Mediates chloride conductance along nephron segments, namely the thick ascending limb of Henle's loop, convoluted tubule and the collecting duct, contributing to the maintenance of systemic acid-base and electrolyte homeostasis. Conducts chloride currents in the stria vascularis of the inner ear to establish the endocochlear potential necessary for normal hearing. The protein is Chloride channel protein ClC-Kb of Homo sapiens (Human).